A 299-amino-acid chain; its full sequence is ATP phosphoribosyltransferase (299 aa).

The protein belongs to the ATP phosphoribosyltransferase family. Long subfamily. As to quaternary structure, equilibrium between an active dimeric form, an inactive hexameric form and higher aggregates. Interconversion between the various forms is largely reversible and is influenced by the natural substrates and inhibitors of the enzyme. The cofactor is Mg(2+).

The protein localises to the cytoplasm. The catalysed reaction is 1-(5-phospho-beta-D-ribosyl)-ATP + diphosphate = 5-phospho-alpha-D-ribose 1-diphosphate + ATP. Its pathway is amino-acid biosynthesis; L-histidine biosynthesis; L-histidine from 5-phospho-alpha-D-ribose 1-diphosphate: step 1/9. With respect to regulation, feedback inhibited by histidine. Functionally, catalyzes the condensation of ATP and 5-phosphoribose 1-diphosphate to form N'-(5'-phosphoribosyl)-ATP (PR-ATP). Has a crucial role in the pathway because the rate of histidine biosynthesis seems to be controlled primarily by regulation of HisG enzymatic activity. The sequence is that of ATP phosphoribosyltransferase from Sodalis glossinidius (strain morsitans).